The following is a 563-amino-acid chain: NAD-dependent malic enzyme (563 aa).

Tyr101 (proton donor) is an active-site residue. Position 154 (Arg154) interacts with NAD(+). Residue Lys172 is the Proton acceptor of the active site. Residues Glu243, Asp244, and Asp267 each contribute to the a divalent metal cation site. 2 residues coordinate NAD(+): Asp267 and Asn416.

The protein belongs to the malic enzymes family. Homotetramer. Mg(2+) is required as a cofactor. Mn(2+) serves as cofactor.

The enzyme catalyses (S)-malate + NAD(+) = pyruvate + CO2 + NADH. It carries out the reaction oxaloacetate + H(+) = pyruvate + CO2. The chain is NAD-dependent malic enzyme from Pseudomonas savastanoi pv. phaseolicola (strain 1448A / Race 6) (Pseudomonas syringae pv. phaseolicola (strain 1448A / Race 6)).